The following is a 244-amino-acid chain: ATP synthase subunit a (244 aa).

A run of 6 helical transmembrane segments spans residues 17 to 37, 75 to 95, 112 to 132, 164 to 184, 196 to 216, and 217 to 237; these read LTNI…AILT, FLAL…LGLP, DPAI…YYGV, LTLG…LGLL, FFLG…WQAF, and SLFI…VYMS.

The protein belongs to the ATPase A chain family. As to quaternary structure, F-type ATPases have 2 components, CF(1) - the catalytic core - and CF(0) - the membrane proton channel. CF(1) has five subunits: alpha(3), beta(3), gamma(1), delta(1), epsilon(1). CF(0) has three main subunits: a(1), b(2) and c(9-12). The alpha and beta chains form an alternating ring which encloses part of the gamma chain. CF(1) is attached to CF(0) by a central stalk formed by the gamma and epsilon chains, while a peripheral stalk is formed by the delta and b chains.

It is found in the cell membrane. Functionally, key component of the proton channel; it plays a direct role in the translocation of protons across the membrane. The polypeptide is ATP synthase subunit a (Bacillus velezensis (strain DSM 23117 / BGSC 10A6 / LMG 26770 / FZB42) (Bacillus amyloliquefaciens subsp. plantarum)).